Reading from the N-terminus, the 78-residue chain is Antitoxin VapB2 (78 aa).

In terms of domain architecture, SpoVT-AbrB spans 4–44 (AKIFMNGQSQAVRLPKEFRFSVKEVSVIPLGKGIVLQPLPN).

This sequence belongs to the VapB family. In terms of assembly, forms complexes with VapC2; probably VapC2(4):VapB2(2) in the absence of DNA, and VapC2(4):VapB2(4) in the presence of DNA. Crystallizes as heterodimers with stoichiometry VapC2(4):VapB2(4) in the presence of its probable promoter DNA. The heterodimers are in contact via alternative VapC-VapC and VapB-VapB interactions. This subunit contacts DNA.

In terms of biological role, antitoxin component of a type II toxin-antitoxin (TA) system. Upon expression in E.coli or S.cerevisiae neutralizes the effect of cognate toxin VapC2, partially inhibits the RNase activity of VapC2. The polypeptide is Antitoxin VapB2 (vapB2) (Rickettsia felis (strain ATCC VR-1525 / URRWXCal2) (Rickettsia azadi)).